Consider the following 436-residue polypeptide: UPF0597 protein YhaM (436 aa).

This sequence belongs to the UPF0597 family.

This is UPF0597 protein YhaM from Escherichia coli O139:H28 (strain E24377A / ETEC).